A 311-amino-acid chain; its full sequence is Glycosyltransferase 6 domain-containing protein 1 (311 aa).

Residues 1–5 (MKAKG) are Cytoplasmic-facing. A helical; Signal-anchor for type II membrane protein membrane pass occupies residues 6 to 26 (RILLLTSCLFLLLLLLAKIHL). Residues 27–311 (RNHQEEELPL…KVAHYPTDDL (285 aa)) are Lumenal-facing. Asn-77 carries N-linked (GlcNAc...) asparagine glycosylation. Substrate-binding positions include 85–90 (FAVSSF), 176–178 (SVN), and 198–201 (HAWW). The active-site Nucleophile is the Glu-266.

The protein belongs to the glycosyltransferase 6 family. The cofactor is Mn(2+).

The protein resides in the membrane. This is Glycosyltransferase 6 domain-containing protein 1 (Glt6d1) from Rattus norvegicus (Rat).